A 515-amino-acid chain; its full sequence is WUSCHEL-related homeobox 12 (515 aa).

Polar residues-rich tracts occupy residues 23–32 and 44–57; these read QQQPDMNGNG and TAAT…SLLS. Disordered regions lie at residues 23–76, 130–156, and 176–195; these read QQQP…WNPR, NKLR…PPST, and LLAA…GSSK. The span at 62 to 71 shows a compositional bias: basic and acidic residues; that stretch reads EGTRNPEPKP. The homeobox; WUS-type DNA-binding region spans 68 to 132; it reads EPKPRWNPRP…NRKSRTKNKL (65 aa). Residues 130 to 143 show a composition bias toward basic residues; that stretch reads NKLRAAGHHHHHGR. Low complexity-rich tracts occupy residues 144 to 156 and 177 to 195; these read AAAL…PPST and LAAT…GSSK.

The protein belongs to the WUS homeobox family.

The protein localises to the nucleus. Its function is as follows. Transcription factor which may be involved in developmental processes. The chain is WUSCHEL-related homeobox 12 (WOX12) from Oryza sativa subsp. japonica (Rice).